A 291-amino-acid chain; its full sequence is N-acetylmannosamine kinase (291 aa).

Residues 5 to 12 (AIDIGGTK) and 132 to 139 (GVGGGVVS) each bind ATP. Residues His156, Cys166, Cys168, and Cys173 each contribute to the Zn(2+) site.

Belongs to the ROK (NagC/XylR) family. NanK subfamily. Homodimer.

The catalysed reaction is an N-acyl-D-mannosamine + ATP = an N-acyl-D-mannosamine 6-phosphate + ADP + H(+). It participates in amino-sugar metabolism; N-acetylneuraminate degradation; D-fructose 6-phosphate from N-acetylneuraminate: step 2/5. Its function is as follows. Catalyzes the phosphorylation of N-acetylmannosamine (ManNAc) to ManNAc-6-P. In Escherichia fergusonii (strain ATCC 35469 / DSM 13698 / CCUG 18766 / IAM 14443 / JCM 21226 / LMG 7866 / NBRC 102419 / NCTC 12128 / CDC 0568-73), this protein is N-acetylmannosamine kinase.